The following is a 585-amino-acid chain: uncharacterized protein (585 aa).

The protein to E.coli YejM.

This is an uncharacterized protein from Haemophilus influenzae (strain ATCC 51907 / DSM 11121 / KW20 / Rd).